Consider the following 353-residue polypeptide: Photosystem II protein D1 (353 aa).

T2 bears the N-acetylthreonine mark. T2 carries the post-translational modification Phosphothreonine. Transmembrane regions (helical) follow at residues 29–46 (YIGWFGVIMIPTLLTATS), 118–133 (HFFLGICCYMGREWEL), and 142–156 (WIAVAYSAPVAAATA). H118 is a binding site for chlorophyll a. Residue Y126 participates in pheophytin a binding. D170 and E189 together coordinate [CaMn4O5] cluster. Residues 197–218 (FHMLGVAGVFGGSLFSAMHGSL) form a helical membrane-spanning segment. H198 is a binding site for chlorophyll a. A quinone is bound by residues H215 and 264–265 (SF). Residue H215 coordinates Fe cation. Position 272 (H272) interacts with Fe cation. The helical transmembrane segment at 274–288 (FLAAWPVVGIWFTAL) threads the bilayer. [CaMn4O5] cluster is bound by residues H332, E333, D342, and A344. A propeptide spanning residues 345-353 (SVEAPSVNA) is cleaved from the precursor.

It belongs to the reaction center PufL/M/PsbA/D family. PSII is composed of 1 copy each of membrane proteins PsbA, PsbB, PsbC, PsbD, PsbE, PsbF, PsbH, PsbI, PsbJ, PsbK, PsbL, PsbM, PsbT, PsbX, PsbY, PsbZ, Psb30/Ycf12, at least 3 peripheral proteins of the oxygen-evolving complex and a large number of cofactors. It forms dimeric complexes. The cofactor is The D1/D2 heterodimer binds P680, chlorophylls that are the primary electron donor of PSII, and subsequent electron acceptors. It shares a non-heme iron and each subunit binds pheophytin, quinone, additional chlorophylls, carotenoids and lipids. D1 provides most of the ligands for the Mn4-Ca-O5 cluster of the oxygen-evolving complex (OEC). There is also a Cl(-1) ion associated with D1 and D2, which is required for oxygen evolution. The PSII complex binds additional chlorophylls, carotenoids and specific lipids.. Post-translationally, the 9 C-terminal residues are removed, probably by CTPA (AC O04073); processing is essential to allow assembly of the oxygen-evolving complex and thus photosynthetic growth. In terms of processing, tyr-161 forms a radical intermediate that is referred to as redox-active TyrZ, YZ or Y-Z.

Its subcellular location is the plastid. The protein resides in the chloroplast thylakoid membrane. It carries out the reaction 2 a plastoquinone + 4 hnu + 2 H2O = 2 a plastoquinol + O2. In terms of biological role, photosystem II (PSII) is a light-driven water:plastoquinone oxidoreductase that uses light energy to abstract electrons from H(2)O, generating O(2) and a proton gradient subsequently used for ATP formation. It consists of a core antenna complex that captures photons, and an electron transfer chain that converts photonic excitation into a charge separation. The D1/D2 (PsbA/PsbD) reaction center heterodimer binds P680, the primary electron donor of PSII as well as several subsequent electron acceptors. In Tetradesmus obliquus (Green alga), this protein is Photosystem II protein D1.